Reading from the N-terminus, the 241-residue chain is MASDAPEVKAPKAKTQKKPKTAPTHPPYIQMVTDAILSLKERDGSSLPALKKFIEAKYGKDIHDKKFPKTLSLALKTFVKNGKLVKVKNSYKLSDAQKSKAKAAAKPKAAPKKAAAPKKAAAPKKAKAPKKEGEKKAVKPKSEKKAAKPKTEKKPKAAKKPKAAKKPAAKKPAAKKPAAKKATPKKAAAPKKAAAPKKAKAATPKKAKAATPKKAKAAAKPKAAAKPKAAAKPKAKAAKKA.

Residues 1–10 are compositionally biased toward basic and acidic residues; it reads MASDAPEVKA. Disordered stretches follow at residues 1–27 and 89–241; these read MASDAPEVKAPKAKTQKKPKTAPTHPP and NSYK…AKKA. Basic residues predominate over residues 11–20; it reads PKAKTQKKPK. The 72-residue stretch at 24 to 95 folds into the H15 domain; the sequence is THPPYIQMVT…KVKNSYKLSD (72 aa). Positions 99–111 are enriched in basic residues; that stretch reads SKAKAAAKPKAAP. 3 tandem repeats follow at residues 111–116, 117–122, and 123–128. The interval 111–217 is 8 X 6 AA repeats of P-K-K-A-[AK]-A; that stretch reads PKKAAAPKKA…KAATPKKAKA (107 aa). The span at 129–155 shows a compositional bias: basic and acidic residues; that stretch reads PKKEGEKKAVKPKSEKKAAKPKTEKKP. 2 stretches are compositionally biased toward basic residues: residues 156 to 184 and 194 to 241; these read KAAKKPKAAKKPAAKKPAAKKPAAKKATP and AAPK…AKKA. The DNA-binding element occupies 183-186; it reads TPKK. 5 consecutive repeat copies span residues 184-189, 190-195, 196-201, 204-209, and 212-217. 2 consecutive DNA-binding regions follow at residues 203 to 206 and 211 to 214; these read TPKK.

This sequence belongs to the histone H1/H5 family.

The protein localises to the nucleus. Its subcellular location is the chromosome. Histones H1 are necessary for the condensation of nucleosome chains into higher-order structures. The protein is Histone H1-II (H1-II) of Volvox carteri (Green alga).